Reading from the N-terminus, the 275-residue chain is Integrase homolog (275 aa).

The segment covering Arg-88 to Gly-111 has biased composition (basic and acidic residues). Residues Arg-88 to Ser-120 are disordered.

The protein belongs to the 'phage' integrase family.

In terms of biological role, integrase-recombinase proteins are responsible for catalyzing strand exchange between DNA molecules and play an important role in the DNA replication. Functionally, may be required for the formation of concatameric complex replicative intermediates and/or their resolution before encapsidation. The sequence is that of Integrase homolog (INT) from Dryophytes versicolor (chameleon treefrog).